We begin with the raw amino-acid sequence, 632 residues long: tRNA uridine 5-carboxymethylaminomethyl modification enzyme MnmG (632 aa).

FAD-binding positions include Gly-13–Gly-18, Val-125, and Ser-180. Gly-273–Phe-287 provides a ligand contact to NAD(+). An FAD-binding site is contributed by Gln-370.

The protein belongs to the MnmG family. In terms of assembly, homodimer. Heterotetramer of two MnmE and two MnmG subunits. The cofactor is FAD.

The protein localises to the cytoplasm. In terms of biological role, NAD-binding protein involved in the addition of a carboxymethylaminomethyl (cmnm) group at the wobble position (U34) of certain tRNAs, forming tRNA-cmnm(5)s(2)U34. The sequence is that of tRNA uridine 5-carboxymethylaminomethyl modification enzyme MnmG from Shewanella sediminis (strain HAW-EB3).